Here is a 181-residue protein sequence, read N- to C-terminus: Large ribosomal subunit protein uL5 (181 aa).

The protein belongs to the universal ribosomal protein uL5 family. As to quaternary structure, part of the 50S ribosomal subunit; part of the 5S rRNA/L5/L18/L25 subcomplex. Contacts the 5S rRNA and the P site tRNA. Forms a bridge to the 30S subunit in the 70S ribosome.

Its function is as follows. This is one of the proteins that bind and probably mediate the attachment of the 5S RNA into the large ribosomal subunit, where it forms part of the central protuberance. In the 70S ribosome it contacts protein S13 of the 30S subunit (bridge B1b), connecting the 2 subunits; this bridge is implicated in subunit movement. Contacts the P site tRNA; the 5S rRNA and some of its associated proteins might help stabilize positioning of ribosome-bound tRNAs. In Campylobacter jejuni subsp. doylei (strain ATCC BAA-1458 / RM4099 / 269.97), this protein is Large ribosomal subunit protein uL5.